Here is a 228-residue protein sequence, read N- to C-terminus: L-ribulose-5-phosphate 4-epimerase UlaF (228 aa).

Residues G26–N27, S43–G44, and S72–S73 each bind substrate. Positions 74, 93, and 95 each coordinate Zn(2+). The Proton donor/acceptor role is filled by D118. H167 contacts Zn(2+). Y225 functions as the Proton donor/acceptor in the catalytic mechanism.

This sequence belongs to the aldolase class II family. AraD/FucA subfamily. Zn(2+) is required as a cofactor.

The catalysed reaction is L-ribulose 5-phosphate = D-xylulose 5-phosphate. It functions in the pathway cofactor degradation; L-ascorbate degradation; D-xylulose 5-phosphate from L-ascorbate: step 4/4. Functionally, catalyzes the isomerization of L-ribulose 5-phosphate to D-xylulose 5-phosphate. Is involved in the anaerobic L-ascorbate utilization. The polypeptide is L-ribulose-5-phosphate 4-epimerase UlaF (Escherichia coli (strain SMS-3-5 / SECEC)).